A 199-amino-acid polypeptide reads, in one-letter code: Pyridoxal 5'-phosphate synthase subunit PdxT (199 aa).

52 to 54 (GES) is an L-glutamine binding site. Residue Cys84 is the Nucleophile of the active site. L-glutamine contacts are provided by residues Arg115 and 143–144 (IR). Residues His179 and Glu181 each act as charge relay system in the active site.

The protein belongs to the glutaminase PdxT/SNO family. As to quaternary structure, in the presence of PdxS, forms a dodecamer of heterodimers. Only shows activity in the heterodimer.

The catalysed reaction is aldehydo-D-ribose 5-phosphate + D-glyceraldehyde 3-phosphate + L-glutamine = pyridoxal 5'-phosphate + L-glutamate + phosphate + 3 H2O + H(+). The enzyme catalyses L-glutamine + H2O = L-glutamate + NH4(+). Its pathway is cofactor biosynthesis; pyridoxal 5'-phosphate biosynthesis. In terms of biological role, catalyzes the hydrolysis of glutamine to glutamate and ammonia as part of the biosynthesis of pyridoxal 5'-phosphate. The resulting ammonia molecule is channeled to the active site of PdxS. The sequence is that of Pyridoxal 5'-phosphate synthase subunit PdxT from Methanosarcina acetivorans (strain ATCC 35395 / DSM 2834 / JCM 12185 / C2A).